The primary structure comprises 955 residues: Glycine dehydrogenase (decarboxylating) (955 aa).

Position 702 is an N6-(pyridoxal phosphate)lysine (Lys702).

Belongs to the GcvP family. As to quaternary structure, the glycine cleavage system is composed of four proteins: P, T, L and H. Requires pyridoxal 5'-phosphate as cofactor.

The catalysed reaction is N(6)-[(R)-lipoyl]-L-lysyl-[glycine-cleavage complex H protein] + glycine + H(+) = N(6)-[(R)-S(8)-aminomethyldihydrolipoyl]-L-lysyl-[glycine-cleavage complex H protein] + CO2. The glycine cleavage system catalyzes the degradation of glycine. The P protein binds the alpha-amino group of glycine through its pyridoxal phosphate cofactor; CO(2) is released and the remaining methylamine moiety is then transferred to the lipoamide cofactor of the H protein. This is Glycine dehydrogenase (decarboxylating) from Bordetella avium (strain 197N).